The primary structure comprises 147 residues: Hemoglobin subunit beta-Y (147 aa).

One can recognise a Globin domain in the interval 3 to 147; it reads HFTAEEKAAI…VANALSLKYH (145 aa). Residues histidine 64 and histidine 93 each contribute to the heme b site.

The protein belongs to the globin family. Heterotetramer of two alpha chains and two beta chains.

In terms of biological role, this is a minor early embryonic beta chain. In Mesocricetus auratus (Golden hamster), this protein is Hemoglobin subunit beta-Y (HBBY).